A 93-amino-acid polypeptide reads, in one-letter code: Translation initiation factor IF-1 (93 aa).

Residues 1–72 (MAKEELIQFE…EKGRLIFRHK (72 aa)) form the S1-like domain. Residues 69–93 (FRHKDERPSGAPRGGPPRGGQFRRR) are disordered.

Belongs to the IF-1 family. As to quaternary structure, component of the 30S ribosomal translation pre-initiation complex which assembles on the 30S ribosome in the order IF-2 and IF-3, IF-1 and N-formylmethionyl-tRNA(fMet); mRNA recruitment can occur at any time during PIC assembly.

The protein resides in the cytoplasm. Functionally, one of the essential components for the initiation of protein synthesis. Stabilizes the binding of IF-2 and IF-3 on the 30S subunit to which N-formylmethionyl-tRNA(fMet) subsequently binds. Helps modulate mRNA selection, yielding the 30S pre-initiation complex (PIC). Upon addition of the 50S ribosomal subunit IF-1, IF-2 and IF-3 are released leaving the mature 70S translation initiation complex. The protein is Translation initiation factor IF-1 of Nitrobacter hamburgensis (strain DSM 10229 / NCIMB 13809 / X14).